We begin with the raw amino-acid sequence, 256 residues long: Small ribosomal subunit protein uS2 (256 aa).

This sequence belongs to the universal ribosomal protein uS2 family.

The sequence is that of Small ribosomal subunit protein uS2 from Brucella melitensis biotype 1 (strain ATCC 23456 / CCUG 17765 / NCTC 10094 / 16M).